Here is a 130-residue protein sequence, read N- to C-terminus: Granulin (130 aa).

The N-terminal stretch at 1-26 is a signal peptide; the sequence is MNYSKIFIFGIISLILMALFSSTVES. 2 cysteine pairs are disulfide-bonded: cysteine 67-cysteine 79 and cysteine 73-cysteine 89.

The protein belongs to the granulin family. Granulins are disulfide bridged.

The protein resides in the secreted. The sequence is that of Granulin (grn) from Dictyostelium discoideum (Social amoeba).